Reading from the N-terminus, the 145-residue chain is uncharacterized protein (145 aa).

The interval 95 to 119 (YVDSTSRTPSAKKDMQGLSVSEKQT) is disordered.

This is an uncharacterized protein from Treponema pallidum (strain Nichols).